Reading from the N-terminus, the 107-residue chain is Small polypeptide DEVIL 9 (107 aa).

Residues 1–12 (MDEKWRLSKKDA) are compositionally biased toward basic and acidic residues. Residues 1–79 (MDEKWRLSKK…EKGSITQKYS (79 aa)) form a disordered region. The chain crosses the membrane as a helical span at residues 9–29 (KKDALAASCSSSSTSSKSKFS). Residues 13 to 65 (LAASCSSSSTSSKSKFSRSFSTSASSSKAPAFVRSSSTKCSVPSSSSSSISRS) are compositionally biased toward low complexity. Residues 73–104 (SITQKYSSLAKEQKGRFYIMRRCVAMLVCWHK) are required for DVL/RTFL small polypeptide activity.

The protein belongs to the DVL/RTFL small polypeptides family.

It localises to the cell membrane. In terms of biological role, small polypeptide acting as a regulatory molecule which coordinates cellular responses required for differentiation, growth and development, probably by restricting polar cell proliferation in lateral organs and coordinating socket cell recruitment and differentiation at trichome sites. This is Small polypeptide DEVIL 9 from Arabidopsis thaliana (Mouse-ear cress).